Consider the following 619-residue polypeptide: DNA mismatch repair protein MutL (619 aa).

A disordered region spans residues 358 to 401 (GGNQFARPSEAREAATRFSITSSREPAASGGSSGGASWPHAQPG).

The protein belongs to the DNA mismatch repair MutL/HexB family.

This protein is involved in the repair of mismatches in DNA. It is required for dam-dependent methyl-directed DNA mismatch repair. May act as a 'molecular matchmaker', a protein that promotes the formation of a stable complex between two or more DNA-binding proteins in an ATP-dependent manner without itself being part of a final effector complex. This Klebsiella pneumoniae (strain 342) protein is DNA mismatch repair protein MutL.